Reading from the N-terminus, the 225-residue chain is Phosphoribosyltransferase domain-containing protein 1 (225 aa).

Residue Ala-2 is modified to N-acetylalanine. Glu-141 and Asp-142 together coordinate Mg(2+). GMP contacts are provided by residues 141–149, Lys-173, 194–195, and Asp-201; these read EDVVGTGRT and FV. Asp-201 is a binding site for Mg(2+).

Belongs to the purine/pyrimidine phosphoribosyltransferase family. As to quaternary structure, homodimer.

Has low, barely detectable phosphoribosyltransferase activity (in vitro). Binds GMP, IMP and alpha-D-5-phosphoribosyl 1-pyrophosphate (PRPP). Is not expected to contribute to purine metabolism or GMP salvage. This Homo sapiens (Human) protein is Phosphoribosyltransferase domain-containing protein 1 (PRTFDC1).